A 283-amino-acid chain; its full sequence is Bifunctional protein FolD (283 aa).

NADP(+)-binding positions include 164–166, serine 189, and isoleucine 230; that span reads GRS.

The protein belongs to the tetrahydrofolate dehydrogenase/cyclohydrolase family. Homodimer.

The catalysed reaction is (6R)-5,10-methylene-5,6,7,8-tetrahydrofolate + NADP(+) = (6R)-5,10-methenyltetrahydrofolate + NADPH. It carries out the reaction (6R)-5,10-methenyltetrahydrofolate + H2O = (6R)-10-formyltetrahydrofolate + H(+). Its pathway is one-carbon metabolism; tetrahydrofolate interconversion. Functionally, catalyzes the oxidation of 5,10-methylenetetrahydrofolate to 5,10-methenyltetrahydrofolate and then the hydrolysis of 5,10-methenyltetrahydrofolate to 10-formyltetrahydrofolate. The sequence is that of Bifunctional protein FolD from Lactobacillus delbrueckii subsp. bulgaricus (strain ATCC 11842 / DSM 20081 / BCRC 10696 / JCM 1002 / NBRC 13953 / NCIMB 11778 / NCTC 12712 / WDCM 00102 / Lb 14).